Reading from the N-terminus, the 75-residue chain is Small ribosomal subunit protein bS18 (75 aa).

It belongs to the bacterial ribosomal protein bS18 family. Part of the 30S ribosomal subunit. Forms a tight heterodimer with protein bS6.

In terms of biological role, binds as a heterodimer with protein bS6 to the central domain of the 16S rRNA, where it helps stabilize the platform of the 30S subunit. The chain is Small ribosomal subunit protein bS18 from Wigglesworthia glossinidia brevipalpis.